Here is an 83-residue protein sequence, read N- to C-terminus: Small ribosomal subunit protein bS16 (83 aa).

The protein belongs to the bacterial ribosomal protein bS16 family.

This is Small ribosomal subunit protein bS16 from Pseudomonas fluorescens (strain Pf0-1).